The chain runs to 557 residues: Coiled-coil domain-containing protein 22 homolog (557 aa).

Coiled coils occupy residues 260-350 and 489-554; these read RLGQ…LQSQ and ELTA…AGRN.

This sequence belongs to the CCDC22 family.

In Anopheles gambiae (African malaria mosquito), this protein is Coiled-coil domain-containing protein 22 homolog.